The sequence spans 102 residues: Peptide chaperone MftB (102 aa).

This sequence belongs to the peptide chaperone MftB family.

Its function is as follows. Peptide chaperone involved in the biosynthesis of the enzyme cofactor mycofactocin (MFT). Binds MftA and MftC with high affinity, and is essential for MftC activity on MftA, likely via the formation of a ternary complex. Is required for the in vivo ethanol assimilation in M.smegmatis. This Mycolicibacterium smegmatis (strain ATCC 700084 / mc(2)155) (Mycobacterium smegmatis) protein is Peptide chaperone MftB.